Reading from the N-terminus, the 120-residue chain is MMTPKNLFERRKRRARQSIKKKGNGRIRLSVFRSGKNIYVQVIDDLNGVTLAAASTLDKELKGNLKTGADKEAAAAVGKLIAERAKAAGITEVVFDRGGYIYHGRVKALADAAREGGLSF.

The protein belongs to the universal ribosomal protein uL18 family. In terms of assembly, part of the 50S ribosomal subunit; part of the 5S rRNA/L5/L18/L25 subcomplex. Contacts the 5S and 23S rRNAs.

Functionally, this is one of the proteins that bind and probably mediate the attachment of the 5S RNA into the large ribosomal subunit, where it forms part of the central protuberance. The sequence is that of Large ribosomal subunit protein uL18 from Paramagnetospirillum magneticum (strain ATCC 700264 / AMB-1) (Magnetospirillum magneticum).